The chain runs to 333 residues: G-protein coupled receptor 146 (333 aa).

The Extracellular portion of the chain corresponds to 1-22 (MWSCGPLNSTAWAEEPLCRNLR). N-linked (GlcNAc...) asparagine glycosylation is present at asparagine 8. Residues 23–43 (LGLWVLSLLYLGAGVPVSLGY) form a helical membrane-spanning segment. Residues 44–64 (NALLVLANLASKNTMTMPDVY) are Cytoplasmic-facing. The helical transmembrane segment at 65-85 (FVNMAVAGLVLTALAPAYLLG) threads the bilayer. Over 86 to 101 (PAHSRWALWSLSSEAH) the chain is Extracellular. A helical transmembrane segment spans residues 102–122 (VTLLILFNVASLVTMYSTALL). Residues 123-145 (SLDYYIERALPRTYMASVYNTRH) are Cytoplasmic-facing. Residues 146 to 166 (VCGFVWGGAVLTSFSSLLFYI) form a helical membrane-spanning segment. Over 167–188 (CSHVSSRIAECARMQNTEAADA) the chain is Extracellular. Residues 189-209 (ILVLIGYVVPGLAVLYALALI) form a helical membrane-spanning segment. Over 210 to 232 (SRIGKEDTPLDQDTSRLDPSVHR) the chain is Cytoplasmic. Residues 233 to 253 (LLVATVCTQFGLWTPYYLSLG) traverse the membrane as a helical segment. Topologically, residues 254 to 277 (HTVLTSRGRTVEGHYLGILQVAKD) are extracellular. Residues 278–298 (LAKFLAFSSSSVTPLLYRYIN) traverse the membrane as a helical segment. At 299 to 333 (KAFPGKLRRLMKKMHCGRRHCSPDPSGIQQVMAQA) the chain is on the cytoplasmic side.

The protein belongs to the G-protein coupled receptor 1 family.

The protein localises to the cell membrane. In terms of biological role, GPCR receptor required for the regulation of plasma cholesterol levels. Receptor for CHLSN, a gut derived hormone which mediates an inhibitory effect of intestinal cholesterol absorption on hepatic cholesterol synthesis. Cholesin-binding exerts an antagonistic effect by inhibiting PKA signaling and suppressing SREBF2-controlled cholesterol in the liver. The sequence is that of G-protein coupled receptor 146 (Gpr146) from Mus musculus (Mouse).